Reading from the N-terminus, the 89-residue chain is Small ribosomal subunit protein uS15 (89 aa).

Belongs to the universal ribosomal protein uS15 family. Part of the 30S ribosomal subunit. Forms a bridge to the 50S subunit in the 70S ribosome, contacting the 23S rRNA.

In terms of biological role, one of the primary rRNA binding proteins, it binds directly to 16S rRNA where it helps nucleate assembly of the platform of the 30S subunit by binding and bridging several RNA helices of the 16S rRNA. Forms an intersubunit bridge (bridge B4) with the 23S rRNA of the 50S subunit in the ribosome. The polypeptide is Small ribosomal subunit protein uS15 (Polynucleobacter necessarius subsp. necessarius (strain STIR1)).